Here is a 144-residue protein sequence, read N- to C-terminus: 3-dehydroquinate dehydratase (144 aa).

Catalysis depends on Y22, which acts as the Proton acceptor. Positions 73, 79, and 86 each coordinate substrate. The active-site Proton donor is the H99. Residues L100–S101 and R110 each bind substrate.

The protein belongs to the type-II 3-dehydroquinase family. In terms of assembly, homododecamer.

The enzyme catalyses 3-dehydroquinate = 3-dehydroshikimate + H2O. The protein operates within metabolic intermediate biosynthesis; chorismate biosynthesis; chorismate from D-erythrose 4-phosphate and phosphoenolpyruvate: step 3/7. Functionally, catalyzes a trans-dehydration via an enolate intermediate. This is 3-dehydroquinate dehydratase from Geotalea daltonii (strain DSM 22248 / JCM 15807 / FRC-32) (Geobacter daltonii).